The primary structure comprises 145 residues: Arginine repressor (145 aa).

It belongs to the ArgR family.

It localises to the cytoplasm. The protein operates within amino-acid biosynthesis; L-arginine biosynthesis [regulation]. Regulates arginine biosynthesis genes. This is Arginine repressor from Streptococcus pyogenes serotype M6 (strain ATCC BAA-946 / MGAS10394).